We begin with the raw amino-acid sequence, 389 residues long: Phosphoribosylformylglycinamidine cyclo-ligase, chloroplastic (389 aa).

The N-terminal 58 residues, 1 to 58 (MEARILQSSSSCYSSLYAVNRSRFSSVSSPKPFSVSFAQTTRTRTRVLSMSKKDGRTD), are a transit peptide targeting the chloroplast. The tract at residues 46 to 65 (RVLSMSKKDGRTDKDDDTDS) is disordered.

Belongs to the AIR synthase family.

It localises to the plastid. It is found in the chloroplast. It carries out the reaction 2-formamido-N(1)-(5-O-phospho-beta-D-ribosyl)acetamidine + ATP = 5-amino-1-(5-phospho-beta-D-ribosyl)imidazole + ADP + phosphate + H(+). It functions in the pathway purine metabolism; IMP biosynthesis via de novo pathway; 5-amino-1-(5-phospho-D-ribosyl)imidazole from N(2)-formyl-N(1)-(5-phospho-D-ribosyl)glycinamide: step 2/2. The chain is Phosphoribosylformylglycinamidine cyclo-ligase, chloroplastic (PUR5) from Arabidopsis thaliana (Mouse-ear cress).